A 114-amino-acid chain; its full sequence is Putative cysteine proteinase inhibitor 9 (114 aa).

The N-terminal stretch at 1–23 is a signal peptide; that stretch reads MRTSSLVLFAAVAVFGAACTAAA.

It belongs to the cystatin family. Phytocystatin subfamily.

It localises to the secreted. Its function is as follows. Specific inhibitor of cysteine proteinases. Probably involved in the regulation of endogenous processes and in defense against pests and pathogens. The sequence is that of Putative cysteine proteinase inhibitor 9 from Oryza sativa subsp. japonica (Rice).